The primary structure comprises 98 residues: MAKSKFRPLHDRVVVRRVESESKTAGGIIIPDTAKEKPQEGEIIAVGSGARDEAGKLVPLDVKAGDRILFGKWSGTEVKLNGEDLLIMKESDIMGIIG.

Belongs to the GroES chaperonin family. Heptamer of 7 subunits arranged in a ring. Interacts with the chaperonin GroEL.

Its subcellular location is the cytoplasm. Its function is as follows. Together with the chaperonin GroEL, plays an essential role in assisting protein folding. The GroEL-GroES system forms a nano-cage that allows encapsulation of the non-native substrate proteins and provides a physical environment optimized to promote and accelerate protein folding. GroES binds to the apical surface of the GroEL ring, thereby capping the opening of the GroEL channel. The sequence is that of Co-chaperonin GroES 5 from Mesorhizobium japonicum (strain LMG 29417 / CECT 9101 / MAFF 303099) (Mesorhizobium loti (strain MAFF 303099)).